A 616-amino-acid chain; its full sequence is Protein SpAN (616 aa).

The signal sequence occupies residues 1–16 (MKLVLLLAGFAALAKC). Residues 17-93 (SLAAPAGVQK…DQKAGRKKRK (77 aa)) constitute a propeptide, activation peptide. Positions 30 to 67 (METSAPEKPSEATTLGLLKTPKPEPKDEEPSPGAFQGD) are disordered. Residues 93 to 294 (KATIYESQRW…ELANRIYECD (202 aa)) form the Peptidase M12A domain. Intrachain disulfides connect Cys-134–Cys-293, Cys-162–Cys-182, Cys-299–Cys-317, Cys-319–Cys-328, Cys-340–Cys-366, and Cys-393–Cys-413. Residue His-190 coordinates Zn(2+). Residue Glu-191 is part of the active site. 2 residues coordinate Zn(2+): His-194 and His-200. Residues 289 to 329 (RIYECDDVEDCSNADECLNGGYHDADCDCVCPSSYSGDLCQ) enclose the EGF-like domain. The CUB 1 domain occupies 340–450 (CSYRFTEMTG…RGFKATYVII (111 aa)). Residues 461-491 (TLQTTPPSTTTLQTTNPSTTTLQTTNPSTTT) are disordered. Cystine bridges form between Cys-503–Cys-529 and Cys-556–Cys-576. Residues 503–614 (CGGTFVGVEG…RGFVASYRAI (112 aa)) form the CUB 2 domain.

Requires Zn(2+) as cofactor. Asymmetrically along the animal-vegetal axis of the blastula.

The polypeptide is Protein SpAN (SPAN) (Strongylocentrotus purpuratus (Purple sea urchin)).